Reading from the N-terminus, the 888-residue chain is DNA mismatch repair protein MutS (888 aa).

An ATP-binding site is contributed by 641-648; that stretch reads GPNMAGKS.

It belongs to the DNA mismatch repair MutS family.

This protein is involved in the repair of mismatches in DNA. It is possible that it carries out the mismatch recognition step. This protein has a weak ATPase activity. In Rickettsia bellii (strain RML369-C), this protein is DNA mismatch repair protein MutS.